Consider the following 150-residue polypeptide: UPF0756 membrane protein ACICU_02320 (150 aa).

The next 4 membrane-spanning stretches (helical) occupy residues 1–21, 45–65, 83–103, and 115–135; these read MLAQFYVNLVVLLVLLICGLL, FFPYIQAHGLNLGILILTIGV, FISFKSLVAIAIGLLVAWLGG, and VVAGLLIGTVAGVALLRGVPV.

Belongs to the UPF0756 family.

The protein resides in the cell membrane. The polypeptide is UPF0756 membrane protein ACICU_02320 (Acinetobacter baumannii (strain ACICU)).